Here is a 130-residue protein sequence, read N- to C-terminus: Protein TraH (130 aa).

The disordered stretch occupies residues Met-1–Ala-78. Over residues Pro-37–Pro-54 the composition is skewed to low complexity.

Its function is as follows. The initiation process of transfer DNA synthesis requires the interaction of at least three plasmid-specific components (TraH, TraI, and TraJ) at the transfer origin resulting in the assembly of a specialized nucleoprotein complex - the relaxosome. This Escherichia coli protein is Protein TraH (traH).